A 536-amino-acid polypeptide reads, in one-letter code: Probable protein S-acyltransferase 23 (536 aa).

The disordered stretch occupies residues 1 to 23; it reads MDSSEIEVVPLDSNSHQSPTESP. A compositionally biased stretch (polar residues) spans 12 to 23; sequence DSNSHQSPTESP. ANK repeat units follow at residues 57–86, 90–119, 123–153, 157–186, 190–219, and 225–254; these read NGFY…DVNS, IQQT…RIEA, NGFR…DYNA, EGRS…CQNR, TGCT…KEEL, and TGST…TRKN. The next 2 membrane-spanning stretches (helical) occupy residues 270–290 and 298–318; these read YAPM…TSIV and ITAM…YALI. One can recognise a DHHC domain in the interval 363–413; sequence QLCPTCKIIRPVRSKHCPTCKRCVEQFDHHCPWISNCVGKKNKRYFLVFVI. Catalysis depends on Cys393, which acts as the S-palmitoyl cysteine intermediate. 2 consecutive transmembrane segments (helical) span residues 407-427 and 454-474; these read YFLV…TTAV and AAVF…LTIS.

This sequence belongs to the DHHC palmitoyltransferase family. In terms of tissue distribution, expressed in roots, shoots, flowers and pollen.

The protein localises to the golgi apparatus membrane. The catalysed reaction is L-cysteinyl-[protein] + hexadecanoyl-CoA = S-hexadecanoyl-L-cysteinyl-[protein] + CoA. Functionally, palmitoyl acyltransferase. In Arabidopsis thaliana (Mouse-ear cress), this protein is Probable protein S-acyltransferase 23 (PAT23).